We begin with the raw amino-acid sequence, 116 residues long: Translation initiation factor 1A (116 aa).

Residues 1-25 form a disordered region; that stretch reads MRCLSKKHQKQGDEHGGEIPLPNPD. Positions 17 to 91 constitute an S1-like domain; it reads GEIPLPNPDE…EKGEVVYKYG (75 aa).

Belongs to the eIF-1A family.

Functionally, seems to be required for maximal rate of protein biosynthesis. Enhances ribosome dissociation into subunits and stabilizes the binding of the initiator Met-tRNA(I) to 40 S ribosomal subunits. The protein is Translation initiation factor 1A (eIF1A) of Desulfurococcus amylolyticus (strain DSM 18924 / JCM 16383 / VKM B-2413 / 1221n) (Desulfurococcus kamchatkensis).